The sequence spans 157 residues: Transcriptional repressor NrdR (157 aa).

Residues 3–34 (CPHCHQNSSRVIDSRPTDEGRVIRRRRECENC) fold into a zinc finger. The ATP-cone domain occupies 49 to 139 (LLVIKKNGTR…VYRQFKDMNV (91 aa)).

It belongs to the NrdR family. Requires Zn(2+) as cofactor.

In terms of biological role, negatively regulates transcription of bacterial ribonucleotide reductase nrd genes and operons by binding to NrdR-boxes. This chain is Transcriptional repressor NrdR, found in Latilactobacillus sakei subsp. sakei (strain 23K) (Lactobacillus sakei subsp. sakei).